A 308-amino-acid polypeptide reads, in one-letter code: Tyrosine recombinase XerD (308 aa).

Positions Pro-13–Leu-97 constitute a Core-binding (CB) domain. Positions Arg-118–Ala-302 constitute a Tyr recombinase domain. Active-site residues include Arg-158, Lys-183, His-254, Arg-257, and His-280. The O-(3'-phospho-DNA)-tyrosine intermediate role is filled by Tyr-289.

This sequence belongs to the 'phage' integrase family. XerD subfamily. Forms a cyclic heterotetrameric complex composed of two molecules of XerC and two molecules of XerD.

It localises to the cytoplasm. Its function is as follows. Site-specific tyrosine recombinase, which acts by catalyzing the cutting and rejoining of the recombining DNA molecules. The XerC-XerD complex is essential to convert dimers of the bacterial chromosome into monomers to permit their segregation at cell division. It also contributes to the segregational stability of plasmids. The chain is Tyrosine recombinase XerD from Ralstonia nicotianae (strain ATCC BAA-1114 / GMI1000) (Ralstonia solanacearum).